Reading from the N-terminus, the 307-residue chain is Putative S-adenosyl-L-methionine-dependent methyltransferase Mflv_5023 (307 aa).

Residues aspartate 133 and 162 to 163 contribute to the S-adenosyl-L-methionine site; that span reads DL. A disordered region spans residues 213 to 234; sequence SRLAVESVPSQQSADQDEMREK.

The protein belongs to the UPF0677 family.

In terms of biological role, exhibits S-adenosyl-L-methionine-dependent methyltransferase activity. The polypeptide is Putative S-adenosyl-L-methionine-dependent methyltransferase Mflv_5023 (Mycolicibacterium gilvum (strain PYR-GCK) (Mycobacterium gilvum (strain PYR-GCK))).